The sequence spans 319 residues: Ubiquinone biosynthesis protein COQ9, mitochondrial (319 aa).

The N-terminal 45 residues, 1-45 (MAATVAFSGVLRRAGWRLLQLRCLPVPRCRPALAPRAFRASAMQL), are a transit peptide targeting the mitochondrion. Residues 17 to 32 (RLLQLRCLPVPRCRPA) carry the SIFI-degron motif. Positions 46-99 (RSLDQQKDQPPPSSSQQQSEAQGAEEPNPEALRSPPRYTDQGGEEEEDYESEEQ) are disordered. The span at 87–98 (GGEEEEDYESEE) shows a compositional bias: acidic residues. The residue at position 176 (K176) is an N6-acetyllysine. R245 contributes to the a 1,2-diacylglycero-3-phosphoethanolamine binding site.

It belongs to the COQ9 family. Homodimer. Heterodimer; two heterodimers of COQ7:COQ9 come together on the same side of the lipid pseudo-bilayer and form a curved tetramer with a hydrophobic surface suitable for membrane interaction. These two tetramers assemble into a soluble octamer with a pseudo-bilayer of lipids captured within. Interacts with COQ7; this interaction allows ubiquinone (CoQ) isoprene intermediates presentation to COQ7 and facilitates the COQ7-mediated hydroxylase step. In response to mitochondrial stress, the precursor protein is ubiquitinated by the SIFI complex in the cytoplasm before mitochondrial import, leading to its degradation. Within the SIFI complex, UBR4 initiates ubiquitin chain that are further elongated or branched by KCMF1.

The protein localises to the mitochondrion. It functions in the pathway cofactor biosynthesis; ubiquinone biosynthesis. Its function is as follows. Membrane-associated protein that warps the membrane surface to access and bind aromatic isoprenes with high specificity, including ubiquinone (CoQ) isoprene intermediates and presents them directly to COQ7, therefore facilitating the COQ7-mediated hydroxylase step. Participates in the biosynthesis of coenzyme Q, also named ubiquinone, an essential lipid-soluble electron transporter for aerobic cellular respiration. The polypeptide is Ubiquinone biosynthesis protein COQ9, mitochondrial (Bos taurus (Bovine)).